We begin with the raw amino-acid sequence, 293 residues long: MTISVPATSANLGPGFDTLGLALELKNRFSIKPSSLSSIQIRGEGSKNPKLRVDNIFVRIFQETFAKLTEERTNFRFQFHNQIPISRGLGSSSAVIIGAISAAFMMAQKKATPEEILSLALAYESHPDNITPACVGGFTVATTRENSVFYIQKPLPDSIKAVVVIPHRPTSTSYSRQTLPKRYSMRDSVFNLSRSSLLTAAFFSERWDLLREASRDRFHQEIRMKQFPALFEVQHTALKEGALMSTLSGSGSSFFNLCLKEDAPSLAQKLQDRFPKFRVLELKFDNKGVVRDD.

84–94 provides a ligand contact to ATP; it reads PISRGLGSSSA.

Belongs to the GHMP kinase family. Homoserine kinase subfamily.

The protein localises to the cytoplasm. It carries out the reaction L-homoserine + ATP = O-phospho-L-homoserine + ADP + H(+). It participates in amino-acid biosynthesis; L-threonine biosynthesis; L-threonine from L-aspartate: step 4/5. Functionally, catalyzes the ATP-dependent phosphorylation of L-homoserine to L-homoserine phosphate. This Wolinella succinogenes (strain ATCC 29543 / DSM 1740 / CCUG 13145 / JCM 31913 / LMG 7466 / NCTC 11488 / FDC 602W) (Vibrio succinogenes) protein is Homoserine kinase.